A 20-amino-acid chain; its full sequence is Unknown protein NF042 from 2D-PAGE (20 aa).

This Naegleria fowleri (Brain eating amoeba) protein is Unknown protein NF042 from 2D-PAGE.